The following is a 407-amino-acid chain: Phosphopentomutase (407 aa).

Mn(2+) is bound by residues aspartate 10, aspartate 306, histidine 311, aspartate 347, histidine 348, and histidine 359.

The protein belongs to the phosphopentomutase family. Mn(2+) is required as a cofactor.

Its subcellular location is the cytoplasm. The enzyme catalyses 2-deoxy-alpha-D-ribose 1-phosphate = 2-deoxy-D-ribose 5-phosphate. The catalysed reaction is alpha-D-ribose 1-phosphate = D-ribose 5-phosphate. The protein operates within carbohydrate degradation; 2-deoxy-D-ribose 1-phosphate degradation; D-glyceraldehyde 3-phosphate and acetaldehyde from 2-deoxy-alpha-D-ribose 1-phosphate: step 1/2. Its function is as follows. Isomerase that catalyzes the conversion of deoxy-ribose 1-phosphate (dRib-1-P) and ribose 1-phosphate (Rib-1-P) to deoxy-ribose 5-phosphate (dRib-5-P) and ribose 5-phosphate (Rib-5-P), respectively. The sequence is that of Phosphopentomutase from Cronobacter sakazakii (strain ATCC BAA-894) (Enterobacter sakazakii).